Here is a 409-residue protein sequence, read N- to C-terminus: Coagulation factor IX (409 aa).

The Ca(2+) site is built by tyrosine 1, asparagine 2, glutamate 7, glutamate 8, glutamate 16, glutamate 18, glutamate 21, glutamate 22, glutamate 27, glutamate 28, and glutamate 31. A Gla domain is found at 1 to 47 (YNSGKLEESFVRGNLERECIEEKCSFEEAREVFENTEKTNEFWKQYV). 4-carboxyglutamate is present on residues glutamate 7, glutamate 8, glutamate 16, glutamate 18, glutamate 21, glutamate 22, glutamate 27, glutamate 28, glutamate 31, glutamate 34, glutamate 37, and glutamate 41. Residue glutamate 16 participates in Mg(2+) binding. Residues cysteine 19 and cysteine 24 are joined by a disulfide bond. Glutamate 21 serves as a coordination point for Mg(2+). Position 27 (glutamate 27) interacts with Mg(2+). Glutamate 31 contacts Mg(2+). Ca(2+) contacts are provided by glutamate 37, glutamate 41, aspartate 48, glycine 49, and glutamine 51. Glutamate 37 and glutamate 41 together coordinate Mg(2+). Residues 48–84 (DGDQCEPNPCLNGGLCKDDINSYECWCQVGFEGKNCE) enclose the EGF-like 1; calcium-binding domain. 10 cysteine pairs are disulfide-bonded: cysteine 52/cysteine 63, cysteine 57/cysteine 72, cysteine 74/cysteine 83, cysteine 89/cysteine 100, cysteine 96/cysteine 110, cysteine 112/cysteine 125, cysteine 133/cysteine 291, cysteine 208/cysteine 224, cysteine 338/cysteine 352, and cysteine 363/cysteine 391. Residues aspartate 65 and aspartate 66 each coordinate Ca(2+). At aspartate 65 the chain carries (3R)-3-hydroxyaspartate. Serine 69 bears the Phosphoserine mark. The EGF-like 2 domain maps to 85–126 (LDATCNIKNGRCKQFCKTGADSKVLCSCTTGYRLAPDQKSCK). Positions 148-182 (AEIIFSNMDYENSTEVEPILDSLTESNQSSDDFIR) are cleaved as a propeptide — activation peptide. Sulfotyrosine is present on tyrosine 157. At serine 160 the chain carries Phosphoserine. Threonine 161 is subject to Phosphothreonine; alternate. Threonine 161 carries an O-linked (GalNAc...) threonine; alternate glycan. Threonine 171 carries O-linked (GalNAc...) threonine glycosylation. The N-linked (GlcNAc...) asparagine glycan is linked to asparagine 174. Positions 183–409 (IVGGENAKPG…YTKVSRYVNW (227 aa)) constitute a Peptidase S1 domain. Catalysis depends on histidine 223, which acts as the Charge relay system. Positions 237, 239, 242, 244, and 247 each coordinate Ca(2+). Asparagine 262 carries an N-linked (GlcNAc...) asparagine glycan. Aspartate 271 acts as the Charge relay system in catalysis. The active-site Charge relay system is the serine 367.

Belongs to the peptidase S1 family. As to quaternary structure, heterodimer of a light chain and a heavy chain; disulfide-linked. Interacts (inactive and activated) with F11 (activated) in calcium-dependent manner. Interacts with SERPINC1. In terms of processing, activated by factor XIa, which excises the activation peptide. The propeptide can also be removed by snake venom protease. Activated by coagulation factor VIIa-tissue factor (F7-F3) complex in calcium-dependent manner. The iron and 2-oxoglutarate dependent 3-hydroxylation of aspartate and asparagine is (R) stereospecific within EGF domains.

The protein localises to the secreted. It catalyses the reaction Selective cleavage of Arg-|-Ile bond in factor X to form factor Xa.. In terms of biological role, factor IX is a vitamin K-dependent plasma protein that participates in the intrinsic pathway of blood coagulation by converting factor X to its active form in the presence of Ca(2+) ions, phospholipids, and factor VIIIa. The chain is Coagulation factor IX (F9) from Sus scrofa (Pig).